A 989-amino-acid polypeptide reads, in one-letter code: Translation initiation factor IF-2 (989 aa).

Disordered stretches follow at residues 43–219 (KRRR…LQAR) and 234–379 (EARR…GGAR). Positions 72–87 (NTPNKDTAVTQTATKN) are enriched in polar residues. Residues 105–146 (PKPVAAEATAQETSKAAPAAAQPVAEKEAAAPASAEAAKSAA) show a composition bias toward low complexity. A compositionally biased stretch (basic and acidic residues) spans 149-159 (VTDRGAKKTTE). Polar residues predominate over residues 160-171 (KNGANASGNRPS). Basic and acidic residues predominate over residues 234-293 (EARRREDRLKQEADLEEQRRIEEKRRLEAEAKVEAEKQAALKEKEKAEAKARAKAEKEAK). Positions 294–303 (AAQAKTAGAA) are enriched in low complexity. A compositionally biased stretch (basic and acidic residues) spans 342–361 (PRREAPRPAMRDRKGEDRRQ). The 171-residue stretch at 489–659 (SRPPVVTIMG…LLQAEMLELK (171 aa)) folds into the tr-type G domain. Residues 498–505 (GHVDHGKT) form a G1 region. 498-505 (GHVDHGKT) contacts GTP. A G2 region spans residues 523 to 527 (GITQH). Residues 545-548 (DTPG) are G3. GTP contacts are provided by residues 545 to 549 (DTPGH) and 599 to 602 (NKMD). The interval 599–602 (NKMD) is G4. The tract at residues 635–637 (SAA) is G5.

Belongs to the TRAFAC class translation factor GTPase superfamily. Classic translation factor GTPase family. IF-2 subfamily.

It is found in the cytoplasm. In terms of biological role, one of the essential components for the initiation of protein synthesis. Protects formylmethionyl-tRNA from spontaneous hydrolysis and promotes its binding to the 30S ribosomal subunits. Also involved in the hydrolysis of GTP during the formation of the 70S ribosomal complex. This is Translation initiation factor IF-2 from Zymomonas mobilis subsp. mobilis (strain ATCC 31821 / ZM4 / CP4).